Reading from the N-terminus, the 261-residue chain is Thiazole synthase (261 aa).

Lys102 serves as the catalytic Schiff-base intermediate with DXP. Residues Gly163, 189–190, and 211–212 contribute to the 1-deoxy-D-xylulose 5-phosphate site; these read AG and NT.

It belongs to the ThiG family. Homotetramer. Forms heterodimers with either ThiH or ThiS.

The protein localises to the cytoplasm. The enzyme catalyses [ThiS sulfur-carrier protein]-C-terminal-Gly-aminoethanethioate + 2-iminoacetate + 1-deoxy-D-xylulose 5-phosphate = [ThiS sulfur-carrier protein]-C-terminal Gly-Gly + 2-[(2R,5Z)-2-carboxy-4-methylthiazol-5(2H)-ylidene]ethyl phosphate + 2 H2O + H(+). Its pathway is cofactor biosynthesis; thiamine diphosphate biosynthesis. In terms of biological role, catalyzes the rearrangement of 1-deoxy-D-xylulose 5-phosphate (DXP) to produce the thiazole phosphate moiety of thiamine. Sulfur is provided by the thiocarboxylate moiety of the carrier protein ThiS. In vitro, sulfur can be provided by H(2)S. This chain is Thiazole synthase, found in Myxococcus xanthus (strain DK1622).